A 522-amino-acid chain; its full sequence is Response regulator mcs4 (522 aa).

Residues 148–274 (DSLESPVSAP…RSISHSSLYT (127 aa)) are disordered. Residues 174 to 194 (NLRNASRTRSHQTLPSSNVNK) are compositionally biased toward polar residues. Over residues 244 to 255 (RSDESTAEKLAK) the composition is skewed to basic and acidic residues. Residues 260–274 (TPTNSRSISHSSLYT) are compositionally biased toward polar residues. The 143-residue stretch at 363-505 (NVLIVEDNII…WLEKKITEWG (143 aa)) folds into the Response regulatory domain. At aspartate 412 the chain carries 4-aspartylphosphate.

The protein localises to the cytoplasm. In terms of biological role, response regulator that coordinately controls the stress activated wak1-wis1-sty1 MAP kinase pathway and fission yeast cell cycle. The protein is Response regulator mcs4 (mcs4) of Schizosaccharomyces pombe (strain 972 / ATCC 24843) (Fission yeast).